Consider the following 334-residue polypeptide: Uroporphyrinogen decarboxylase (334 aa).

Substrate is bound by residues 22–26 (RQVGR), D71, Y140, S195, and H310.

This sequence belongs to the uroporphyrinogen decarboxylase family. As to quaternary structure, homodimer.

The protein localises to the cytoplasm. It carries out the reaction uroporphyrinogen III + 4 H(+) = coproporphyrinogen III + 4 CO2. It functions in the pathway porphyrin-containing compound metabolism; protoporphyrin-IX biosynthesis; coproporphyrinogen-III from 5-aminolevulinate: step 4/4. In terms of biological role, catalyzes the decarboxylation of four acetate groups of uroporphyrinogen-III to yield coproporphyrinogen-III. This Chlamydia muridarum (strain MoPn / Nigg) protein is Uroporphyrinogen decarboxylase.